Reading from the N-terminus, the 363-residue chain is Aminomethyltransferase (363 aa).

Belongs to the GcvT family. The glycine cleavage system is composed of four proteins: P, T, L and H.

It carries out the reaction N(6)-[(R)-S(8)-aminomethyldihydrolipoyl]-L-lysyl-[protein] + (6S)-5,6,7,8-tetrahydrofolate = N(6)-[(R)-dihydrolipoyl]-L-lysyl-[protein] + (6R)-5,10-methylene-5,6,7,8-tetrahydrofolate + NH4(+). In terms of biological role, the glycine cleavage system catalyzes the degradation of glycine. This Staphylococcus haemolyticus (strain JCSC1435) protein is Aminomethyltransferase.